The primary structure comprises 861 residues: Leucine--tRNA ligase (861 aa).

The 'HIGH' region motif lies at 42 to 52 (PYPSGRIHMGH). The short motif at 623–627 (KMSKS) is the 'KMSKS' region element. ATP is bound at residue lysine 626.

This sequence belongs to the class-I aminoacyl-tRNA synthetase family.

The protein resides in the cytoplasm. It carries out the reaction tRNA(Leu) + L-leucine + ATP = L-leucyl-tRNA(Leu) + AMP + diphosphate. The chain is Leucine--tRNA ligase from Caulobacter vibrioides (strain ATCC 19089 / CIP 103742 / CB 15) (Caulobacter crescentus).